Reading from the N-terminus, the 220-residue chain is Cytidylate kinase (220 aa).

Position 9–17 (9–17 (GPAASGKST)) interacts with ATP.

This sequence belongs to the cytidylate kinase family. Type 1 subfamily.

Its subcellular location is the cytoplasm. The enzyme catalyses CMP + ATP = CDP + ADP. The catalysed reaction is dCMP + ATP = dCDP + ADP. This chain is Cytidylate kinase, found in Thermotoga sp. (strain RQ2).